The primary structure comprises 334 residues: tRNA N6-adenosine threonylcarbamoyltransferase (334 aa).

His107 and His111 together coordinate Fe cation. Residues Leu129–Gly133, Asp162, Gly175, and Asn269 each bind substrate. Asp297 is a binding site for Fe cation.

Belongs to the KAE1 / TsaD family. The cofactor is Fe(2+).

It is found in the cytoplasm. It carries out the reaction L-threonylcarbamoyladenylate + adenosine(37) in tRNA = N(6)-L-threonylcarbamoyladenosine(37) in tRNA + AMP + H(+). Required for the formation of a threonylcarbamoyl group on adenosine at position 37 (t(6)A37) in tRNAs that read codons beginning with adenine. Is involved in the transfer of the threonylcarbamoyl moiety of threonylcarbamoyl-AMP (TC-AMP) to the N6 group of A37, together with TsaE and TsaB. TsaD likely plays a direct catalytic role in this reaction. This chain is tRNA N6-adenosine threonylcarbamoyltransferase, found in Campylobacter concisus (strain 13826).